Consider the following 437-residue polypeptide: MRSIIIASNSSGGGKTTVTLGLMKALVSRGLEVQGFKVGPDYIDTAFHESVTGKLSRNLDLFLMGEDGVKASFARGNGDYGIIEGVMGLYDGRGVTSEYSTAHLSKILKLPIVLVLTPKAQSLTLCAEIEGIVNFDSDINIVGVILNNISEGYYNLLRIAIEEHFKGKIKVFGYLPKNEALSLKSRHLGLVQSVEINTLNEKLEKCSELLENHVKVDELLKYFSKTSDFKDDYHLKNKNLKIAVAKDEAFNFYYKENLELLHELGEVTYFSPLKDKKLPENIDFLYIGGGYPEIFKDALSENKDMLLEIKNKLEDGTRCYAECGGLMYLMEAIEGSSMVGFFKGSSYMGKRLQNFGYAEVTVSKENRLLPLNIKINCHEFHKSYVNTEEETIYSVTKYTYLGENKSWRCGYTKKNVLAAYAHVHFFGNLDFLKHLVR.

One can recognise a GATase cobBQ-type domain in the interval Lys-241 to Asp-430. The active-site Nucleophile is Cys-323.

The protein belongs to the CobB/CbiA family. Mg(2+) is required as a cofactor.

The enzyme catalyses cob(II)yrinate + 2 L-glutamine + 2 ATP + 2 H2O = cob(II)yrinate a,c diamide + 2 L-glutamate + 2 ADP + 2 phosphate + 2 H(+). It functions in the pathway cofactor biosynthesis; adenosylcobalamin biosynthesis; cob(II)yrinate a,c-diamide from sirohydrochlorin (anaerobic route): step 10/10. Catalyzes the ATP-dependent amidation of the two carboxylate groups at positions a and c of cobyrinate, using either L-glutamine or ammonia as the nitrogen source. The protein is Cobyrinate a,c-diamide synthase of Clostridium acetobutylicum (strain ATCC 824 / DSM 792 / JCM 1419 / IAM 19013 / LMG 5710 / NBRC 13948 / NRRL B-527 / VKM B-1787 / 2291 / W).